The sequence spans 121 residues: Ribonuclease P protein component (121 aa).

Belongs to the RnpA family. Consists of a catalytic RNA component (M1 or rnpB) and a protein subunit.

The enzyme catalyses Endonucleolytic cleavage of RNA, removing 5'-extranucleotides from tRNA precursor.. In terms of biological role, RNaseP catalyzes the removal of the 5'-leader sequence from pre-tRNA to produce the mature 5'-terminus. It can also cleave other RNA substrates such as 4.5S RNA. The protein component plays an auxiliary but essential role in vivo by binding to the 5'-leader sequence and broadening the substrate specificity of the ribozyme. This chain is Ribonuclease P protein component, found in Geobacillus thermodenitrificans (strain NG80-2).